Here is a 259-residue protein sequence, read N- to C-terminus: uncharacterized protein (259 aa).

The active site involves E46.

Belongs to the PhzF family.

This is an uncharacterized protein from Pseudomonas aeruginosa (strain ATCC 15692 / DSM 22644 / CIP 104116 / JCM 14847 / LMG 12228 / 1C / PRS 101 / PAO1).